We begin with the raw amino-acid sequence, 245 residues long: Folate receptor gamma (245 aa).

The N-terminal stretch at 1–22 (MDMAWQMMQLLLLALVTAAGSA) is a signal peptide. Cystine bridges form between C37/C65, C57/C105, C66/C109, C89/C175, C96/C146, C135/C209, C139/C189, and C152/C169. Residues D103 and Y107 each contribute to the folate site. N121 is a glycosylation site (N-linked (GlcNAc...) asparagine). Folate contacts are provided by residues 124–128 (WRKER), 157–162 (HKGWNW), and S196. N-linked (GlcNAc...) asparagine glycosylation occurs at N161. N201 carries N-linked (GlcNAc...) asparagine glycosylation.

It belongs to the folate receptor family. As to expression, spleen, thymus, bone marrow, ovarian carcinoma, and uterine carcinoma.

It is found in the secreted. Binds to folate and reduced folic acid derivatives and mediates delivery of 5-methyltetrahydrofolate to the interior of cells. Isoform Short does not bind folate. The sequence is that of Folate receptor gamma (FOLR3) from Homo sapiens (Human).